Consider the following 94-residue polypeptide: uncharacterized protein (94 aa).

This is an uncharacterized protein from Rickettsia prowazekii (strain Madrid E).